The chain runs to 276 residues: Large ribosomal subunit protein uL2 (276 aa).

Residues 224–276 (VMNPVDHPHGGGEGKAPIGRKSPMTPWGKPTLGYKTRKKKNKSDKFIIRRRKK) form a disordered region. The segment covering 258–276 (KTRKKKNKSDKFIIRRRKK) has biased composition (basic residues).

Belongs to the universal ribosomal protein uL2 family. Part of the 50S ribosomal subunit. Forms a bridge to the 30S subunit in the 70S ribosome.

In terms of biological role, one of the primary rRNA binding proteins. Required for association of the 30S and 50S subunits to form the 70S ribosome, for tRNA binding and peptide bond formation. It has been suggested to have peptidyltransferase activity; this is somewhat controversial. Makes several contacts with the 16S rRNA in the 70S ribosome. The chain is Large ribosomal subunit protein uL2 from Geobacillus thermodenitrificans (strain NG80-2).